The sequence spans 447 residues: Asparagine--tRNA ligase (447 aa).

It belongs to the class-II aminoacyl-tRNA synthetase family. Homodimer.

It localises to the cytoplasm. It catalyses the reaction tRNA(Asn) + L-asparagine + ATP = L-asparaginyl-tRNA(Asn) + AMP + diphosphate + H(+). The chain is Asparagine--tRNA ligase from Herpetosiphon aurantiacus (strain ATCC 23779 / DSM 785 / 114-95).